We begin with the raw amino-acid sequence, 138 residues long: Protein PsiE homolog (138 aa).

The next 4 helical transmembrane spans lie at 14-34 (LQAL…GLLI), 56-76 (YEML…ALII), 84-104 (HFPL…LIII), and 109-129 (AIST…FFIV).

Belongs to the PsiE family.

Its subcellular location is the cell membrane. The protein is Protein PsiE homolog of Bacillus velezensis (strain DSM 23117 / BGSC 10A6 / LMG 26770 / FZB42) (Bacillus amyloliquefaciens subsp. plantarum).